Consider the following 351-residue polypeptide: Dihydroorotate dehydrogenase (quinone) (351 aa).

Residues Ala-67 to Lys-71 and Thr-91 each bind FMN. Lys-71 provides a ligand contact to substrate. Asn-116–Phe-120 is a binding site for substrate. FMN is bound by residues Asn-145 and Asn-178. Asn-178 serves as a coordination point for substrate. Catalysis depends on Ser-181, which acts as the Nucleophile. Substrate is bound at residue Asn-183. Positions 214 and 242 each coordinate FMN. Asn-243–Thr-244 is a substrate binding site. FMN-binding positions include Gly-262, Gly-291, and Tyr-312 to Thr-313.

This sequence belongs to the dihydroorotate dehydrogenase family. Type 2 subfamily. In terms of assembly, monomer. The cofactor is FMN.

The protein resides in the cell membrane. The catalysed reaction is (S)-dihydroorotate + a quinone = orotate + a quinol. It functions in the pathway pyrimidine metabolism; UMP biosynthesis via de novo pathway; orotate from (S)-dihydroorotate (quinone route): step 1/1. Functionally, catalyzes the conversion of dihydroorotate to orotate with quinone as electron acceptor. The polypeptide is Dihydroorotate dehydrogenase (quinone) (Nitratiruptor sp. (strain SB155-2)).